The primary structure comprises 473 residues: Membrane protein TMS1 (473 aa).

Residues 1–6 (MGAVIS) lie on the Cytoplasmic side of the membrane. The helical transmembrane segment at 7 to 29 (LPVSMAGSFVASCFGGCCSNLVT) threads the bilayer. Over 30–38 (KTASSLGSS) the chain is Vacuolar. Residues 39–61 (SLGTRLLYAVWLLLNSLISWVSY) form a helical membrane-spanning segment. Residues 62-81 (SANKSILWPGKTCTGTGECG) are Cytoplasmic-facing. Residues 82–104 (FFTVHRLNFALGCLHLILALVLT) form a helical membrane-spanning segment. The Vacuolar portion of the chain corresponds to 105-118 (GVKSTNDVRAALQN). A helical transmembrane segment spans residues 119 to 138 (SWWSLKFILYLCLIVLSFVI). Over 139 to 144 (PNDFYI) the chain is Cytoplasmic. A helical membrane pass occupies residues 145 to 167 (FFSKWVSVPSGAIFILVGLILLV). The Vacuolar segment spans residues 168–194 (DFAHEWAETCISHVESEDEDSSFWQRF). Residues 195 to 217 (LVLGTTSMYTASIIMTVVMYVMF) traverse the membrane as a helical segment. Over 218–228 (CHQQCNMNQTA) the chain is Cytoplasmic. The helical transmembrane segment at 229-246 (VTVNLILTVITLVLSVNP) threads the bilayer. Over 247–295 (KIQEANPKSGLAQSSMVSVYCTYLTMSAMSSEPDDKMCNPLVRSSGTRK) the chain is Vacuolar. Residues 296-318 (FSIILGSLFTFIAIAYTTTRAAA) form a helical membrane-spanning segment. Over 319–398 (NSAFQGTNTN…DDERTGTKYN (80 aa)) the chain is Cytoplasmic. The chain crosses the membrane as a helical span at residues 399–421 (YTLFHVIFFLATQWIAILLTINV). Residues 422–435 (TQDDVGDFIPVGRT) are Vacuolar-facing. A helical transmembrane segment spans residues 436 to 458 (YFYSWVKIVSAWICYALYGWTVV). The Cytoplasmic segment spans residues 459–473 (APAIMPDRFDYENYY).

It belongs to the TDE1 family.

The protein resides in the membrane. The polypeptide is Membrane protein TMS1 (TMS1) (Saccharomyces cerevisiae (strain ATCC 204508 / S288c) (Baker's yeast)).